The primary structure comprises 838 residues: Probable beta-glucosidase K (838 aa).

An N-linked (GlcNAc...) asparagine glycan is attached at Asn-19. Residue Asp-232 is part of the active site. Residues Asn-324 and Asn-489 are each glycosylated (N-linked (GlcNAc...) asparagine). Residues 405-564 enclose the PA14 domain; sequence EGQPGLRMRF…DPELAIARAV (160 aa).

Belongs to the glycosyl hydrolase 3 family.

Its subcellular location is the secreted. It catalyses the reaction Hydrolysis of terminal, non-reducing beta-D-glucosyl residues with release of beta-D-glucose.. It participates in glycan metabolism; cellulose degradation. Beta-glucosidases are one of a number of cellulolytic enzymes involved in the degradation of cellulosic biomass. Catalyzes the last step releasing glucose from the inhibitory cellobiose. The chain is Probable beta-glucosidase K (bglK) from Emericella nidulans (strain FGSC A4 / ATCC 38163 / CBS 112.46 / NRRL 194 / M139) (Aspergillus nidulans).